The primary structure comprises 409 residues: Elongation factor Tu, chloroplastic (409 aa).

The region spanning 10-214 (KPHVNIGTIG…AVDTYIPTPE (205 aa)) is the tr-type G domain. Residues 19 to 26 (GHVDHGKT) are G1. Position 19–26 (19–26 (GHVDHGKT)) interacts with GTP. Position 26 (T26) interacts with Mg(2+). The tract at residues 60-64 (GITIN) is G2. The G3 stretch occupies residues 81–84 (DCPG). Residues 81 to 85 (DCPGH) and 136 to 139 (NKED) contribute to the GTP site. The tract at residues 136-139 (NKED) is G4. Residues 174-176 (SAL) form a G5 region.

Belongs to the TRAFAC class translation factor GTPase superfamily. Classic translation factor GTPase family. EF-Tu/EF-1A subfamily.

It is found in the plastid. The protein resides in the chloroplast. The enzyme catalyses GTP + H2O = GDP + phosphate + H(+). In terms of biological role, GTP hydrolase that promotes the GTP-dependent binding of aminoacyl-tRNA to the A-site of ribosomes during protein biosynthesis. The chain is Elongation factor Tu, chloroplastic (tufA) from Porphyra purpurea (Red seaweed).